The primary structure comprises 433 residues: uncharacterized protein (433 aa).

The protein localises to the virion. This is an uncharacterized protein from Acanthamoeba polyphaga (Amoeba).